Reading from the N-terminus, the 79-residue chain is UPF0180 protein BCG9842_B3897 (79 aa).

It belongs to the UPF0180 family.

The polypeptide is UPF0180 protein BCG9842_B3897 (Bacillus cereus (strain G9842)).